Here is a 312-residue protein sequence, read N- to C-terminus: Pantothenate kinase (312 aa).

97-104 lines the ATP pocket; it reads GSVAVGKS.

It belongs to the prokaryotic pantothenate kinase family.

It is found in the cytoplasm. The catalysed reaction is (R)-pantothenate + ATP = (R)-4'-phosphopantothenate + ADP + H(+). It participates in cofactor biosynthesis; coenzyme A biosynthesis; CoA from (R)-pantothenate: step 1/5. This is Pantothenate kinase from Mycolicibacterium vanbaalenii (strain DSM 7251 / JCM 13017 / BCRC 16820 / KCTC 9966 / NRRL B-24157 / PYR-1) (Mycobacterium vanbaalenii).